The following is a 548-amino-acid chain: Glucose-6-phosphate isomerase (548 aa).

The active-site Proton donor is the glutamate 353. Catalysis depends on residues histidine 384 and lysine 512.

Belongs to the GPI family.

The protein localises to the cytoplasm. It catalyses the reaction alpha-D-glucose 6-phosphate = beta-D-fructose 6-phosphate. It functions in the pathway carbohydrate biosynthesis; gluconeogenesis. Its pathway is carbohydrate degradation; glycolysis; D-glyceraldehyde 3-phosphate and glycerone phosphate from D-glucose: step 2/4. Catalyzes the reversible isomerization of glucose-6-phosphate to fructose-6-phosphate. The polypeptide is Glucose-6-phosphate isomerase (Chlorobium chlorochromatii (strain CaD3)).